The chain runs to 44 residues: Cytochrome b559 subunit beta (44 aa).

Residues 19–35 (WLSVHALGVPSVFFLGA) form a helical membrane-spanning segment. H23 is a binding site for heme.

Belongs to the PsbE/PsbF family. Heterodimer of an alpha subunit and a beta subunit. PSII is composed of 1 copy each of membrane proteins PsbA, PsbB, PsbC, PsbD, PsbE, PsbF, PsbH, PsbI, PsbJ, PsbK, PsbL, PsbM, PsbT, PsbX, PsbY, PsbZ, Psb30/Ycf12, peripheral proteins PsbO, CyanoQ (PsbQ), PsbU, PsbV and a large number of cofactors. It forms dimeric complexes. The cofactor is heme b.

Its subcellular location is the cellular thylakoid membrane. Its function is as follows. This b-type cytochrome is tightly associated with the reaction center of photosystem II (PSII). PSII is a light-driven water:plastoquinone oxidoreductase that uses light energy to abstract electrons from H(2)O, generating O(2) and a proton gradient subsequently used for ATP formation. It consists of a core antenna complex that captures photons, and an electron transfer chain that converts photonic excitation into a charge separation. The protein is Cytochrome b559 subunit beta of Synechococcus elongatus (strain ATCC 33912 / PCC 7942 / FACHB-805) (Anacystis nidulans R2).